The chain runs to 559 residues: AP-4 complex accessory subunit tepsin (559 aa).

The ENTH domain occupies 2–135; the sequence is LDRLAFLQQL…FSESIPSPSH (134 aa). 3 disordered regions span residues 131 to 157, 214 to 290, and 472 to 491; these read PSPSHTVSAKERSQSGMGSQASSAPAL, AIPS…ESLD, and PNGAANQKNPNGSTEKSDPA. 2 stretches are compositionally biased toward low complexity: residues 144 to 154 and 266 to 281; these read QSGMGSQASSA and SRSSDVGSKSGSDGQS. The segment covering 472-485 has biased composition (polar residues); it reads PNGAANQKNPNGST.

Its subcellular location is the golgi apparatus. It localises to the trans-Golgi network membrane. The protein resides in the cytoplasmic vesicle. It is found in the cytoplasm. The protein localises to the cytosol. Functionally, may play a role in vesicular trafficking of proteins at the trans-Golgi network. The polypeptide is AP-4 complex accessory subunit tepsin (Xenopus laevis (African clawed frog)).